The chain runs to 421 residues: UPF0415 protein C7orf25 homolog (421 aa).

Belongs to the UPF0415 family.

The polypeptide is UPF0415 protein C7orf25 homolog (Bos taurus (Bovine)).